The chain runs to 57 residues: Large ribosomal subunit protein bL32 (57 aa).

Belongs to the bacterial ribosomal protein bL32 family.

This Halalkalibacterium halodurans (strain ATCC BAA-125 / DSM 18197 / FERM 7344 / JCM 9153 / C-125) (Bacillus halodurans) protein is Large ribosomal subunit protein bL32 (rpmF).